A 1300-amino-acid chain; its full sequence is Serine protease EspP (1300 aa).

The first 55 residues, 1-55 (MNKIYSLKYSHITGGLIAVSELSGRVSSRATGKKKHKRILALCFLGLLQSSYSFA), serve as a signal peptide directing secretion. Residues 57 to 311 (QMDISNFYIR…NQTTIDNLKN (255 aa)) enclose the Peptidase S6 domain. Residues His127, Asp156, and Ser263 each act as charge relay system in the active site. In terms of domain architecture, Autotransporter spans 1034 to 1300 (DINGEAGAWA…AVNANFRYSF (267 aa)).

Post-translationally, cleaved to release the mature protein from the outer membrane.

The protein resides in the periplasm. It is found in the secreted. Its subcellular location is the cell surface. It localises to the cell outer membrane. Serine protease with cytotoxic effect. Disrupts actin cytoskeleton resulting cell detachment in vitro. This is Serine protease EspP (espP) from Escherichia coli.